We begin with the raw amino-acid sequence, 875 residues long: E3 SUMO-protein ligase SIZ1 (875 aa).

The SAP domain maps to L12–L46. The PHD-type zinc finger occupies K114–S169. The SP-RING-type zinc finger occupies S349–N430. 4 residues coordinate Zn(2+): C380, H382, C403, and C406. Residues G796 to G820 form a disordered region. Residues V808 to T819 are compositionally biased toward polar residues.

The protein belongs to the PIAS family.

It localises to the nucleus. It participates in protein modification; protein sumoylation. Probable SUMO E3 ligase that may regulate Pi starvation responses. The sequence is that of E3 SUMO-protein ligase SIZ1 (SIZ1) from Oryza sativa subsp. japonica (Rice).